A 377-amino-acid chain; its full sequence is DnaJ-related protein SCJ1 (377 aa).

The first 21 residues, 1 to 21 (MIPKLYIHLILSLLLLPLILA), serve as a signal peptide directing secretion. In terms of domain architecture, J spans 23-88 (DYYAILEIDK…EKKKIYDQFG (66 aa)). Residues 156 to 237 (GSSIEFTLNL…CHGKKVTKKN (82 aa)) form a CR-type zinc finger. CXXCXGXG motif repeat units lie at residues 169 to 176 (CDACHGSG), 185 to 192 (CPDCQGRG), 211 to 218 (CGRCGGTG), and 225 to 232 (CKTCHGKK). Residues 288–290 (RGD) carry the Cell attachment site motif. The Prevents secretion from ER signature appears at 374–377 (KDEL).

The protein localises to the endoplasmic reticulum lumen. In terms of biological role, regulates protein folding in the endoplasmic reticulum lumen. Probably acts as a J-protein for the Hsp70-type chaperone KAR2 by stimulating its ATP-dependent reaction cycle and initiating folding reactions. Also involved in the endoplasmic reticulum-associated degradation (ERAD) process. Cooperates with KAR2 and another J-protein JEM1 to facilitate the export of ERAD substrates to the cytoplasm by maintaining them in a translocation-competent state and preventing their aggregation in the endoplasmic reticulum lumen. This is DnaJ-related protein SCJ1 (SCJ1) from Saccharomyces cerevisiae (strain ATCC 204508 / S288c) (Baker's yeast).